The following is a 449-amino-acid chain: Lysine-sensitive aspartokinase 3 (449 aa).

Positions 2 to 245 (SEIVVSKFGG…AAKRIDEIAF (244 aa)) are aspartokinase. 8-11 (KFGG) contacts ATP. Residues T45, E119, and 198 to 201 (RGGS) contribute to the substrate site. ATP is bound by residues 221-222 (TD), Y227, R232, and 257-258 (KV). Residues 246-449 (AEAAEMATFG…VQKLHSNLFE (204 aa)) are interface. The tract at residues 299-449 (FRALALRRNQ…VQKLHSNLFE (151 aa)) is required for homodimerization. The 82-residue stretch at 313 to 394 (LHSLNMLHSR…GLALVALIGN (82 aa)) folds into the ACT domain. L-lysine-binding positions include M318, S321, 324-325 (FL), 338-340 (SVD), and 345-346 (SE).

The protein belongs to the aspartokinase family. Homodimer. In the inactive form a homotetramer is formed.

The catalysed reaction is L-aspartate + ATP = 4-phospho-L-aspartate + ADP. The protein operates within amino-acid biosynthesis; L-lysine biosynthesis via DAP pathway; (S)-tetrahydrodipicolinate from L-aspartate: step 1/4. Its activity is regulated as follows. Synthesis and activity are sensitive to the allosteric inhibitor lysine, one of the end metabolites of the aspartic acid family branched pathway. This chain is Lysine-sensitive aspartokinase 3 (lysC), found in Escherichia coli (strain K12).